A 496-amino-acid chain; its full sequence is Glutamyl-tRNA(Gln) amidotransferase subunit A (496 aa).

Catalysis depends on charge relay system residues K75 and S150. Residue S174 is the Acyl-ester intermediate of the active site.

This sequence belongs to the amidase family. GatA subfamily. In terms of assembly, heterotrimer of A, B and C subunits.

It carries out the reaction L-glutamyl-tRNA(Gln) + L-glutamine + ATP + H2O = L-glutaminyl-tRNA(Gln) + L-glutamate + ADP + phosphate + H(+). Its function is as follows. Allows the formation of correctly charged Gln-tRNA(Gln) through the transamidation of misacylated Glu-tRNA(Gln) in organisms which lack glutaminyl-tRNA synthetase. The reaction takes place in the presence of glutamine and ATP through an activated gamma-phospho-Glu-tRNA(Gln). The polypeptide is Glutamyl-tRNA(Gln) amidotransferase subunit A (Burkholderia ambifaria (strain ATCC BAA-244 / DSM 16087 / CCUG 44356 / LMG 19182 / AMMD) (Burkholderia cepacia (strain AMMD))).